The following is a 166-amino-acid chain: NAD(P)H-quinone oxidoreductase subunit I, chloroplastic (166 aa).

2 4Fe-4S ferredoxin-type domains span residues glycine 55–lysine 84 and leucine 95–glutamate 124. The [4Fe-4S] cluster site is built by cysteine 64, cysteine 67, cysteine 70, cysteine 74, cysteine 104, cysteine 107, cysteine 110, and cysteine 114.

It belongs to the complex I 23 kDa subunit family. As to quaternary structure, NDH is composed of at least 16 different subunits, 5 of which are encoded in the nucleus. [4Fe-4S] cluster serves as cofactor.

The protein localises to the plastid. It is found in the chloroplast thylakoid membrane. The enzyme catalyses a plastoquinone + NADH + (n+1) H(+)(in) = a plastoquinol + NAD(+) + n H(+)(out). The catalysed reaction is a plastoquinone + NADPH + (n+1) H(+)(in) = a plastoquinol + NADP(+) + n H(+)(out). Functionally, NDH shuttles electrons from NAD(P)H:plastoquinone, via FMN and iron-sulfur (Fe-S) centers, to quinones in the photosynthetic chain and possibly in a chloroplast respiratory chain. The immediate electron acceptor for the enzyme in this species is believed to be plastoquinone. Couples the redox reaction to proton translocation, and thus conserves the redox energy in a proton gradient. The sequence is that of NAD(P)H-quinone oxidoreductase subunit I, chloroplastic from Parthenium hysterophorus (Santa Maria feverfew).